Consider the following 280-residue polypeptide: Dolichyl-diphosphooligosaccharide--protein glycosyltransferase subunit 2 (280 aa).

A signal peptide spans 1–16 (MKLLLVLLTIASVALA). The Lumenal segment spans residues 17 to 187 (AVDDVAVNNF…FRQPEKRPSA (171 aa)). Residues 188 to 208 (LISDLFTIICLSPLLILVVLW) traverse the membrane as a helical segment. The Cytoplasmic portion of the chain corresponds to 209-222 (SQVGINFQNAPASP). A helical transmembrane segment spans residues 223–243 (WVPIFHVGLIGIFGIYFMFWV). A topological domain (lumenal) is located at residue glutamine 244. The chain crosses the membrane as a helical span at residues 245–265 (FDMFVTLKYLAVLGFLTFVAG). Residues 266–280 (NRVLRAISESKQKSE) lie on the Cytoplasmic side of the membrane.

The protein belongs to the SWP1 family. In terms of assembly, component of the oligosaccharyltransferase (OST) complex.

The protein localises to the endoplasmic reticulum membrane. It participates in protein modification; protein glycosylation. Subunit of the oligosaccharyl transferase (OST) complex that catalyzes the initial transfer of a defined glycan (Glc(3)Man(9)GlcNAc(2) in eukaryotes) from the lipid carrier dolichol-pyrophosphate to an asparagine residue within an Asn-X-Ser/Thr consensus motif in nascent polypeptide chains, the first step in protein N-glycosylation. N-glycosylation occurs cotranslationally and the complex associates with the Sec61 complex at the channel-forming translocon complex that mediates protein translocation across the endoplasmic reticulum (ER). All subunits are required for a maximal enzyme activity. This chain is Dolichyl-diphosphooligosaccharide--protein glycosyltransferase subunit 2, found in Caenorhabditis elegans.